The following is a 177-amino-acid chain: tRNA-splicing endonuclease (177 aa).

Residues Tyr-114, His-123, and Lys-154 contribute to the active site.

Belongs to the tRNA-intron endonuclease family. Archaeal short subfamily. In terms of assembly, homotetramer; although the tetramer contains four active sites, only two participate in the cleavage. Therefore, it should be considered as a dimer of dimers.

It carries out the reaction pretRNA = a 3'-half-tRNA molecule with a 5'-OH end + a 5'-half-tRNA molecule with a 2',3'-cyclic phosphate end + an intron with a 2',3'-cyclic phosphate and a 5'-hydroxyl terminus.. Functionally, endonuclease that removes tRNA introns. Cleaves pre-tRNA at the 5'- and 3'-splice sites to release the intron. The products are an intron and two tRNA half-molecules bearing 2',3' cyclic phosphate and 5'-OH termini. Recognizes a pseudosymmetric substrate in which 2 bulged loops of 3 bases are separated by a stem of 4 bp. This is tRNA-splicing endonuclease from Methanococcus maripaludis (strain DSM 14266 / JCM 13030 / NBRC 101832 / S2 / LL).